A 192-amino-acid chain; its full sequence is Fe/S biogenesis protein NfuA (192 aa).

Residues C149 and C152 each contribute to the [4Fe-4S] cluster site.

The protein belongs to the NfuA family. As to quaternary structure, homodimer. [4Fe-4S] cluster serves as cofactor.

In terms of biological role, involved in iron-sulfur cluster biogenesis. Binds a 4Fe-4S cluster, can transfer this cluster to apoproteins, and thereby intervenes in the maturation of Fe/S proteins. Could also act as a scaffold/chaperone for damaged Fe/S proteins. This is Fe/S biogenesis protein NfuA from Shewanella oneidensis (strain ATCC 700550 / JCM 31522 / CIP 106686 / LMG 19005 / NCIMB 14063 / MR-1).